Reading from the N-terminus, the 85-residue chain is Large ribosomal subunit protein bL27 (85 aa).

Gly residues predominate over residues 1 to 10 (MAQKKGGGST). Residues 1–21 (MAQKKGGGSTRNGRDSQPKML) are disordered.

It belongs to the bacterial ribosomal protein bL27 family.

In Leptothrix cholodnii (strain ATCC 51168 / LMG 8142 / SP-6) (Leptothrix discophora (strain SP-6)), this protein is Large ribosomal subunit protein bL27.